Here is a 737-residue protein sequence, read N- to C-terminus: Ribosome-releasing factor 2, mitochondrial (737 aa).

A mitochondrion-targeting transit peptide spans Met-1 to Ile-36. One can recognise a tr-type G domain in the interval Lys-39 to Ser-318. Residues Ala-48 to Thr-55, Asp-112 to His-116, and Asn-166 to Asp-169 contribute to the GTP site.

It belongs to the TRAFAC class translation factor GTPase superfamily. Classic translation factor GTPase family. EF-G/EF-2 subfamily.

It is found in the mitochondrion. In terms of biological role, mitochondrial GTPase that mediates the disassembly of ribosomes from messenger RNA at the termination of mitochondrial protein biosynthesis. Not involved in the GTP-dependent ribosomal translocation step during translation elongation. In Anopheles gambiae (African malaria mosquito), this protein is Ribosome-releasing factor 2, mitochondrial.